A 112-amino-acid chain; its full sequence is CRISPR-associated endoribonuclease Cas2 2 (112 aa).

Residue aspartate 15 participates in Mg(2+) binding.

This sequence belongs to the CRISPR-associated endoribonuclease Cas2 protein family. As to quaternary structure, homodimer, forms a heterotetramer with a Cas1 homodimer. Requires Mg(2+) as cofactor.

In terms of biological role, CRISPR (clustered regularly interspaced short palindromic repeat), is an adaptive immune system that provides protection against mobile genetic elements (viruses, transposable elements and conjugative plasmids). CRISPR clusters contain sequences complementary to antecedent mobile elements and target invading nucleic acids. CRISPR clusters are transcribed and processed into CRISPR RNA (crRNA). Functions as a ssRNA-specific endoribonuclease. Involved in the integration of spacer DNA into the CRISPR cassette. This Rhodospirillum rubrum (strain ATCC 11170 / ATH 1.1.1 / DSM 467 / LMG 4362 / NCIMB 8255 / S1) protein is CRISPR-associated endoribonuclease Cas2 2.